A 122-amino-acid polypeptide reads, in one-letter code: Serum amyloid A-2 protein (122 aa).

The signal sequence occupies residues 1–19; the sequence is MKLLTSLVFCSLLLGVCHG. Basic and acidic residues predominate over residues 89 to 108; it reads RGHEDTMADQEANRHGRSGK. The disordered stretch occupies residues 89-122; sequence RGHEDTMADQEANRHGRSGKDPNYYRPPGLPAKY.

The protein belongs to the SAA family. As to quaternary structure, apolipoprotein of the HDL complex. In terms of tissue distribution, expressed by the liver; secreted in plasma.

It is found in the secreted. Major acute phase reactant. This chain is Serum amyloid A-2 protein, found in Mus musculus (Mouse).